The following is a 613-amino-acid chain: Dihydroxy-acid dehydratase (613 aa).

Aspartate 81 contacts Mg(2+). Cysteine 122 provides a ligand contact to [2Fe-2S] cluster. Mg(2+) contacts are provided by aspartate 123 and lysine 124. Residue lysine 124 is modified to N6-carboxylysine. Cysteine 195 is a binding site for [2Fe-2S] cluster. Glutamate 491 serves as a coordination point for Mg(2+). Residue serine 517 is the Proton acceptor of the active site.

This sequence belongs to the IlvD/Edd family. As to quaternary structure, homodimer. It depends on [2Fe-2S] cluster as a cofactor. The cofactor is Mg(2+).

The catalysed reaction is (2R)-2,3-dihydroxy-3-methylbutanoate = 3-methyl-2-oxobutanoate + H2O. The enzyme catalyses (2R,3R)-2,3-dihydroxy-3-methylpentanoate = (S)-3-methyl-2-oxopentanoate + H2O. The protein operates within amino-acid biosynthesis; L-isoleucine biosynthesis; L-isoleucine from 2-oxobutanoate: step 3/4. Its pathway is amino-acid biosynthesis; L-valine biosynthesis; L-valine from pyruvate: step 3/4. In terms of biological role, functions in the biosynthesis of branched-chain amino acids. Catalyzes the dehydration of (2R,3R)-2,3-dihydroxy-3-methylpentanoate (2,3-dihydroxy-3-methylvalerate) into 2-oxo-3-methylpentanoate (2-oxo-3-methylvalerate) and of (2R)-2,3-dihydroxy-3-methylbutanoate (2,3-dihydroxyisovalerate) into 2-oxo-3-methylbutanoate (2-oxoisovalerate), the penultimate precursor to L-isoleucine and L-valine, respectively. The polypeptide is Dihydroxy-acid dehydratase (Vibrio vulnificus (strain CMCP6)).